Reading from the N-terminus, the 375-residue chain is MAHSALSQVSVAVPLQTDSSFRRSTFKATSITFSDRSSWISMPPIDLKAAPSRNQHIVCMSVQQASKAKVSVSPLSLEDAKEPPLNIYKPKEPYTATIVSVERLVGPKAPGETCHIVIDHDGNLPYWEGQSYGVIPPGENPKKPGNPHNVRLYLIASTRYGDSFDGKTASLCVRRAVYYDPETGKEDPSKNGVCSNFLCDSKPGDKVKITGPSGKIMLLPEEIPNATHIMIGTGTGVAPFRGYLRRMFMESVPTKFNGLAWLFLGVANTDSLLYDDEFTKYLNDYPGNFRYDRALSREQKNNKGGKMYVQDKIEEYSDEIFKLLDEGAHIYFCGLKGMMPGIQDTLKRVAERRGESWEQKLSQLKKNKQWHVEVY.

Residues 1–60 (MAHSALSQVSVAVPLQTDSSFRRSTFKATSITFSDRSSWISMPPIDLKAAPSRNQHIVCM) constitute a chloroplast transit peptide. An FAD-binding FR-type domain is found at 91 to 219 (KEPYTATIVS…TGPSGKIMLL (129 aa)). Residues 151 to 154 (RLYL), 172 to 174 (CVR), tyrosine 178, 193 to 195 (VCS), and threonine 235 each bind FAD. Arginine 174 is an NADP(+) binding site. NADP(+) contacts are provided by residues threonine 235, 266–267 (VA), 296–297 (SR), lysine 306, 334–335 (GL), and glutamate 373.

This sequence belongs to the ferredoxin--NADP reductase type 1 family. The cofactor is FAD.

The protein resides in the plastid. It is found in the chloroplast. It catalyses the reaction 2 reduced [2Fe-2S]-[ferredoxin] + NADP(+) + H(+) = 2 oxidized [2Fe-2S]-[ferredoxin] + NADPH. It functions in the pathway energy metabolism; photosynthesis. Its function is as follows. May play a key role in regulating the relative amounts of cyclic and non-cyclic electron flow to meet the demands of the plant for ATP and reducing power. Is involved in nitrate assimilation. This Nicotiana tabacum (Common tobacco) protein is Ferredoxin--NADP reductase, root-type isozyme, chloroplastic.